The primary structure comprises 282 residues: 4-hydroxy-3-methylbut-2-enyl diphosphate reductase (282 aa).

C14 contacts [4Fe-4S] cluster. H43 and H78 together coordinate (2E)-4-hydroxy-3-methylbut-2-enyl diphosphate. 2 residues coordinate dimethylallyl diphosphate: H43 and H78. H43 and H78 together coordinate isopentenyl diphosphate. C100 provides a ligand contact to [4Fe-4S] cluster. A (2E)-4-hydroxy-3-methylbut-2-enyl diphosphate-binding site is contributed by H128. Position 128 (H128) interacts with dimethylallyl diphosphate. H128 contacts isopentenyl diphosphate. The Proton donor role is filled by E130. T164 is a binding site for (2E)-4-hydroxy-3-methylbut-2-enyl diphosphate. C192 serves as a coordination point for [4Fe-4S] cluster. Positions 220, 221, 222, and 266 each coordinate (2E)-4-hydroxy-3-methylbut-2-enyl diphosphate. Residues S220, S221, N222, and S266 each coordinate dimethylallyl diphosphate. Isopentenyl diphosphate is bound by residues S220, S221, N222, and S266.

This sequence belongs to the IspH family. Requires [4Fe-4S] cluster as cofactor.

It carries out the reaction isopentenyl diphosphate + 2 oxidized [2Fe-2S]-[ferredoxin] + H2O = (2E)-4-hydroxy-3-methylbut-2-enyl diphosphate + 2 reduced [2Fe-2S]-[ferredoxin] + 2 H(+). The catalysed reaction is dimethylallyl diphosphate + 2 oxidized [2Fe-2S]-[ferredoxin] + H2O = (2E)-4-hydroxy-3-methylbut-2-enyl diphosphate + 2 reduced [2Fe-2S]-[ferredoxin] + 2 H(+). It functions in the pathway isoprenoid biosynthesis; dimethylallyl diphosphate biosynthesis; dimethylallyl diphosphate from (2E)-4-hydroxy-3-methylbutenyl diphosphate: step 1/1. Its pathway is isoprenoid biosynthesis; isopentenyl diphosphate biosynthesis via DXP pathway; isopentenyl diphosphate from 1-deoxy-D-xylulose 5-phosphate: step 6/6. Catalyzes the conversion of 1-hydroxy-2-methyl-2-(E)-butenyl 4-diphosphate (HMBPP) into a mixture of isopentenyl diphosphate (IPP) and dimethylallyl diphosphate (DMAPP). Acts in the terminal step of the DOXP/MEP pathway for isoprenoid precursor biosynthesis. In Clostridium perfringens (strain 13 / Type A), this protein is 4-hydroxy-3-methylbut-2-enyl diphosphate reductase.